The sequence spans 419 residues: Ribosome biogenesis protein WDR12 homolog (419 aa).

Residues 10 to 91 (VQVHLKTKQE…EDAIDIEYVE (82 aa)) are ubiquitin-like (UBL) domain. 7 WD repeats span residues 103–140 (LHDD…KLTI), 142–184 (GHTA…NAVE), 191–230 (GHER…TSEG), 249–287 (GHRE…IKTE), 289–328 (STNK…GSVV), 334–374 (GHNA…APLY), and 378–416 (GHGE…IENM).

Belongs to the WD repeat WDR12/YTM1 family.

The protein resides in the nucleus. The protein localises to the nucleolus. Its subcellular location is the nucleoplasm. Required for maturation of ribosomal RNAs and formation of the large ribosomal subunit. This Drosophila virilis (Fruit fly) protein is Ribosome biogenesis protein WDR12 homolog.